Reading from the N-terminus, the 139-residue chain is Large ribosomal subunit protein uL16 (139 aa).

It belongs to the universal ribosomal protein uL16 family. In terms of assembly, part of the 50S ribosomal subunit.

Binds 23S rRNA and is also seen to make contacts with the A and possibly P site tRNAs. In Crocosphaera subtropica (strain ATCC 51142 / BH68) (Cyanothece sp. (strain ATCC 51142)), this protein is Large ribosomal subunit protein uL16.